Consider the following 103-residue polypeptide: MPNQRIRIRLKAFDHKLIDQSTAEIVETAKRTGAQVSGPIPLPTRKERYTILTSPHVNKDARDQYEIRTHKRLVDIIEPTDKTVDALMRLDLAAGVDVQISLG.

It belongs to the universal ribosomal protein uS10 family. In terms of assembly, part of the 30S ribosomal subunit.

Functionally, involved in the binding of tRNA to the ribosomes. The chain is Small ribosomal subunit protein uS10 from Pseudoalteromonas atlantica (strain T6c / ATCC BAA-1087).